The primary structure comprises 289 residues: Mitochondrial fission regulator 1-like (289 aa).

Threonine 27 is modified (phosphothreonine). Phosphoserine is present on residues serine 38, serine 100, serine 107, serine 221, serine 222, serine 235, serine 258, and serine 270.

This sequence belongs to the MTFR1 family. Post-translationally, phosphorylated by AMPK. Upon stress, phosphorylation by AMPK is sufficient to induce mitochondrial fragmentation.

It localises to the mitochondrion outer membrane. Mitochondrial protein required for adaptation of miochondrial dynamics to metabolic changes. Regulates mitochondrial morphology at steady state and mediates AMPK-dependent stress-induced mitochondrial fragmentation via the control of OPA1 levels. This chain is Mitochondrial fission regulator 1-like (Mtfr1l), found in Rattus norvegicus (Rat).